A 147-amino-acid chain; its full sequence is Small ribosomal subunit protein eS19 (147 aa).

The protein belongs to the eukaryotic ribosomal protein eS19 family. As to quaternary structure, component of the small ribosomal subunit.

It localises to the cytoplasm. The protein localises to the nucleus. Component of the small ribosomal subunit. The ribosome is a large ribonucleoprotein complex responsible for the synthesis of proteins in the cell. Required for pre-rRNA processing and maturation of 40S ribosomal subunits. The chain is Small ribosomal subunit protein eS19 (rps19) from Gillichthys mirabilis (Long-jawed mudsucker).